Here is a 347-residue protein sequence, read N- to C-terminus: Subtilase cytotoxin subunit A (347 aa).

Positions 1 to 21 (MLKILWTYILFLLFISASARA) are cleaved as a signal peptide. The Peptidase S8 domain occupies 24-327 (PWYFDAIGLT…GRVLNAEKAI (304 aa)). Residues Asp52, His89, and Ser272 each act as charge relay system in the active site. Cys288 and Cys331 are joined by a disulfide. The A2 domain stretch occupies residues 322 to 347 (NAEKAISMFCKKNYIPVRQGRMSEEL). Residues 344-347 (SEEL) carry the Prevents secretion from ER motif.

Belongs to the peptidase S8 family. Forms a complex with SubB with the stoichiometry SubA1:SubB5 (called SubAB5).

It localises to the secreted. It is found in the host cytoplasm. The protein localises to the host cytosol. Its subcellular location is the host endoplasmic reticulum lumen. Protease subunit of subtilase cytotoxin SubAB5. An endoprotease specific for host endoplasmic reticulum (ER) chaperone BiP/HSPA5, has no activity on human HSP70 or HSPA8. Cleaves between 'Leu-416' and 'Leu-417' of BiP/HSPA5 in the hinge between BiP's ATPase and protein-binding domains. This induces host ER stress response and eventual cell death. Culture supernatant of E.coli expressing both subA and subB are toxic for Vero cells (African green monkey kidney cell line), Chinese hamster ovary cells and Hct-8 cells (human colonic epithelial cell line); the subunits are not toxic individually. Purified SubAB5 is highly toxic, &lt;0.1 pg is able to kill at least 50% of 30'000 Vero cells in a microtiter plate assay after 3 days; no cytotoxicity is seen at 24 hours. Preabsorption with cells expressing a ganglioside GM2 mimic reduced cytotoxicity of SubAB5 by 93% in the Vero cytotoxicity assay. Intraperitoneal injection of 200 ng of purified SubAB5 kills mice; the higher the dose the faster the mice die. Animals injected intraperitoneally with purified SubAB5 have microvascular thrombi in the brain and other organs, including the renal tubules and glomeruli. Injection induces an unfolded response in mice. Mice fed E.coli cells expressing cloned SubAB5 experience drastic weight loss and appear ill and lethargic. Protein synthesis in Vero cells is transiently inhibited by SubAB5; both subunits are required for this effect. Inhibition of protein synthesis is prevented by brefeldin A; cells are arrested in the G1 phase. SubAB5 at 100 ng/ml induced caspase-dependent apoptosis in Vero cells through mitochondrial membrane damage. The protein is Subtilase cytotoxin subunit A of Escherichia coli.